The sequence spans 267 residues: MNALLSNPFKEGLRKGDTQIGLWLSSTTSYMAEIAATSGYDWLLIDGEHAPNTVQDLYHQLQAIAPYASQPVIRPIEGSKALIKQVLDIGAQTLLIPMVDTAEQARQVVSATRYPPLGQRGVGASVARAARWGRIDNYMAQANESLCLLVQVESKVALENLDAILEVEGIDGVFIGPADLSASLGYPDNAGHPEVQRIIESCIYRIRAAGKAAGFLAVDPAMAQKCLAWGANFVAVGVDTMLYTEALDSRLAMFKSVQSVSTAKRSY.

His49 (proton acceptor) is an active-site residue. Residue Gln151 participates in substrate binding. Glu153 lines the Mg(2+) pocket. Substrate contacts are provided by Ala178 and Asp179. Position 179 (Asp179) interacts with Mg(2+).

The protein belongs to the HpcH/HpaI aldolase family. KDR aldolase subfamily. In terms of assembly, homohexamer. Requires Mg(2+) as cofactor.

It carries out the reaction 2-dehydro-3-deoxy-L-rhamnonate = (S)-lactaldehyde + pyruvate. Catalyzes the reversible retro-aldol cleavage of 2-keto-3-deoxy-L-rhamnonate (KDR) to pyruvate and lactaldehyde. The sequence is that of 2-keto-3-deoxy-L-rhamnonate aldolase from Salmonella enteritidis PT4 (strain P125109).